Consider the following 137-residue polypeptide: UPF0148 protein MJ0890 (137 aa).

The protein belongs to the UPF0148 family.

This chain is UPF0148 protein MJ0890, found in Methanocaldococcus jannaschii (strain ATCC 43067 / DSM 2661 / JAL-1 / JCM 10045 / NBRC 100440) (Methanococcus jannaschii).